Here is a 230-residue protein sequence, read N- to C-terminus: Cytochrome c oxidase subunit 2 (230 aa).

The Mitochondrial intermembrane segment spans residues 1–26 (MATPAQLGLMDAASPVMEEMIYFHDH). The chain crosses the membrane as a helical span at residues 27–48 (VMLVLILITCLIFYSMLVLISS). Residues 49 to 62 (KYIYRFLTDGHVIE) are Mitochondrial matrix-facing. Residues 63 to 82 (TVWTVIPAIILVVVALPSLK) traverse the membrane as a helical segment. The Mitochondrial intermembrane portion of the chain corresponds to 83-230 (LLYLTDELDN…GWCDMMLDEE (148 aa)). Cu cation is bound by residues His161, Cys196, Glu198, Cys200, His204, and Met207. Mg(2+) is bound at residue Glu198.

The protein belongs to the cytochrome c oxidase subunit 2 family. Component of the cytochrome c oxidase (complex IV, CIV), a multisubunit enzyme composed of a catalytic core of 3 subunits and several supernumerary subunits. The complex exists as a monomer or a dimer and forms supercomplexes (SCs) in the inner mitochondrial membrane with ubiquinol-cytochrome c oxidoreductase (cytochrome b-c1 complex, complex III, CIII). Requires Cu cation as cofactor.

It is found in the mitochondrion inner membrane. The catalysed reaction is 4 Fe(II)-[cytochrome c] + O2 + 8 H(+)(in) = 4 Fe(III)-[cytochrome c] + 2 H2O + 4 H(+)(out). In terms of biological role, component of the cytochrome c oxidase, the last enzyme in the mitochondrial electron transport chain which drives oxidative phosphorylation. The respiratory chain contains 3 multisubunit complexes succinate dehydrogenase (complex II, CII), ubiquinol-cytochrome c oxidoreductase (cytochrome b-c1 complex, complex III, CIII) and cytochrome c oxidase (complex IV, CIV), that cooperate to transfer electrons derived from NADH and succinate to molecular oxygen, creating an electrochemical gradient over the inner membrane that drives transmembrane transport and the ATP synthase. Cytochrome c oxidase is the component of the respiratory chain that catalyzes the reduction of oxygen to water. Electrons originating from reduced cytochrome c in the intermembrane space (IMS) are transferred via the dinuclear copper A center (CU(A)) of subunit 2 and heme A of subunit 1 to the active site in subunit 1, a binuclear center (BNC) formed by heme A3 and copper B (CU(B)). The BNC reduces molecular oxygen to 2 water molecules using 4 electrons from cytochrome c in the IMS and 4 protons from the mitochondrial matrix. The polypeptide is Cytochrome c oxidase subunit 2 (COII) (Branchiostoma floridae (Florida lancelet)).